The chain runs to 510 residues: JmjC domain-containing histone demethylation protein 1 (510 aa).

The PHD-type zinc finger occupies 2–53 (PNRCDFCTSSSTKDKQQWTQCDGCDRWVHDVCVSITDPVSYAKYHCPTCTKT). Residues 216-365 (TLVRELDLVD…TQIDIAGIEV (150 aa)) form the JmjC domain. Threonine 255 contacts substrate. Residues histidine 258 and aspartate 260 each contribute to the Fe cation site. Lysine 275 is a binding site for substrate. Histidine 333 serves as a coordination point for Fe cation. The segment at 475–510 (KGESKEKHKIESQLPEEKILQGSKLESKEEVQTENF) is disordered. The span at 477–510 (ESKEKHKIESQLPEEKILQGSKLESKEEVQTENF) shows a compositional bias: basic and acidic residues.

The protein belongs to the JHDM1 histone demethylase family. The cofactor is Fe(2+).

Its subcellular location is the nucleus. The catalysed reaction is N(6),N(6)-dimethyl-L-lysyl(36)-[histone H3] + 2 2-oxoglutarate + 2 O2 = L-lysyl(36)-[histone H3] + 2 formaldehyde + 2 succinate + 2 CO2. In terms of biological role, histone demethylase that specifically demethylates 'Lys-36' of histone H3, thereby playing a central role in histone code. The polypeptide is JmjC domain-containing histone demethylation protein 1 (JHD1) (Yarrowia lipolytica (strain CLIB 122 / E 150) (Yeast)).